Reading from the N-terminus, the 366-residue chain is Zinc-regulated GTPase metalloprotein activator 1 (366 aa).

The psi-PxLVp motif motif lies at 5–12 (DECPELVP). 31 to 38 (GYLGAGKT) lines the GTP pocket. Cys89, Cys91, and Cys92 together coordinate Zn(2+). The short motif at 89 to 92 (CLCC) is the CXCC motif element. GTP contacts are provided by residues 92 to 96 (CSVKD) and 185 to 188 (NKTD). The CobW C-terminal domain maps to 258-357 (TITFEVPGSV…GEILKKEFIS (100 aa)).

It belongs to the SIMIBI class G3E GTPase family. ZNG1 subfamily.

It localises to the nucleus. The catalysed reaction is GTP + H2O = GDP + phosphate + H(+). Functionally, zinc chaperone that directly transfers zinc cofactor to target metalloproteins, thereby activating them. Catalyzes zinc insertion into the active site of methionine aminopeptidase METAP1, which function to cleave the initiator methionine from polypeptides during or after protein translation. Mechanistically, the N-terminal psi-PxLVp motif binds to the C6H2-type zinc finger of inactive form of METAP1. After formation of the docked complex, zinc is transferred from the CXCC motif in the GTPase domain of ZNG1 to the zinc binding site in the peptidase domain of METAP1 in a process requiring GTP hydrolysis. GTP/GDP exchange is required for release of active METAP1. This chain is Zinc-regulated GTPase metalloprotein activator 1, found in Danio rerio (Zebrafish).